Reading from the N-terminus, the 310-residue chain is Putative methyltransferase mtx subunit H (310 aa).

This sequence belongs to the MtrH family. In terms of assembly, may be part of a complex composed of 3 subunits; MtxA, MtxH and MtxX.

This Methanosarcina acetivorans (strain ATCC 35395 / DSM 2834 / JCM 12185 / C2A) protein is Putative methyltransferase mtx subunit H (mtxH).